Reading from the N-terminus, the 464-residue chain is L-cystine uptake protein TcyP (464 aa).

The next 10 helical transmembrane spans lie at 3–23 (TLLV…LYYM), 34–54 (VFTA…IYEP), 73–93 (YVKL…ISAF), 107–127 (GLII…GIAA), 184–204 (PTST…FIGV), 225–245 (IVMR…LALM), 263–283 (FVLA…LLIA), 347–367 (AGIY…IDPL), 371–391 (FILT…GVGG), and 395–415 (FAAL…ALVI).

It belongs to the dicarboxylate/amino acid:cation symporter (DAACS) (TC 2.A.23) family.

It localises to the membrane. In terms of biological role, mediates uptake of L-cystine, the oxidized form of L-cysteine. The protein is L-cystine uptake protein TcyP of Bacillus cereus (strain ATCC 14579 / DSM 31 / CCUG 7414 / JCM 2152 / NBRC 15305 / NCIMB 9373 / NCTC 2599 / NRRL B-3711).